Here is a 172-residue protein sequence, read N- to C-terminus: Adenylate kinase isoenzyme 6 (172 aa).

The ATP site is built by G13, G15, K16, T17, and T18. Residues 33–56 form an NMPbind region; that stretch reads NVGDLAREGELYDGFDEEYNCPIL. Residues 108–118 form an LID region; the sequence is TRGYSEKKLND. ATP contacts are provided by R109 and K148.

This sequence belongs to the adenylate kinase family. AK6 subfamily. As to quaternary structure, monomer and homodimer. Interacts with small ribosomal subunit protein uS11. Not a structural component of 43S pre-ribosomes, but transiently interacts with them by binding to uS11. Interacts with COIL (via C-terminus).

It is found in the cytoplasm. Its subcellular location is the nucleus. The protein localises to the nucleoplasm. The protein resides in the cajal body. The enzyme catalyses AMP + ATP = 2 ADP. The catalysed reaction is ATP + H2O = ADP + phosphate + H(+). In terms of biological role, broad-specificity nucleoside monophosphate (NMP) kinase that catalyzes the reversible transfer of the terminal phosphate group between nucleoside triphosphates and monophosphates. Also has ATPase activity. Involved in the late cytoplasmic maturation steps of the 40S ribosomal particles, specifically 18S rRNA maturation. While NMP activity is not required for ribosome maturation, ATPase activity is. Associates transiently with small ribosomal subunit protein uS11. ATP hydrolysis breaks the interaction with uS11. May temporarily remove uS11 from the ribosome to enable a conformational change of the ribosomal RNA that is needed for the final maturation step of the small ribosomal subunit. Its NMP activity may have a role in nuclear energy homeostasis. May be involved in regulation of Cajal body (CB) formation. This is Adenylate kinase isoenzyme 6 from Oryctolagus cuniculus (Rabbit).